Consider the following 315-residue polypeptide: GPN-loop GTPase 2 homolog (315 aa).

12-17 lines the GTP pocket; sequence GSGKTV. The short motif at 69 to 71 is the Gly-Pro-Asn (GPN)-loop; involved in dimer interface element; the sequence is GPN. Residue 171–174 coordinates GTP; the sequence is SKMD.

This sequence belongs to the GPN-loop GTPase family. Heterodimers with gpn1 or gpn3. Binds to RNA polymerase II (RNAPII).

In terms of biological role, small GTPase required for proper localization of RNA polymerase II and III (RNAPII and RNAPIII). May act at an RNAP assembly step prior to nuclear import. This is GPN-loop GTPase 2 homolog (gpn2) from Dictyostelium discoideum (Social amoeba).